A 427-amino-acid chain; its full sequence is 3-phosphoshikimate 1-carboxyvinyltransferase (427 aa).

3-phosphoshikimate is bound by residues Lys-22, Ser-23, and Arg-27. Lys-22 is a phosphoenolpyruvate binding site. Phosphoenolpyruvate is bound by residues Gly-96 and Arg-124. Residues Ser-169, Ser-170, Gln-171, Ser-197, Asp-313, Asn-336, and Lys-340 each coordinate 3-phosphoshikimate. Residue Gln-171 participates in phosphoenolpyruvate binding. The active-site Proton acceptor is the Asp-313. Phosphoenolpyruvate is bound by residues Arg-344, Arg-386, and Lys-411.

It belongs to the EPSP synthase family. As to quaternary structure, monomer.

It localises to the cytoplasm. The enzyme catalyses 3-phosphoshikimate + phosphoenolpyruvate = 5-O-(1-carboxyvinyl)-3-phosphoshikimate + phosphate. It participates in metabolic intermediate biosynthesis; chorismate biosynthesis; chorismate from D-erythrose 4-phosphate and phosphoenolpyruvate: step 6/7. Catalyzes the transfer of the enolpyruvyl moiety of phosphoenolpyruvate (PEP) to the 5-hydroxyl of shikimate-3-phosphate (S3P) to produce enolpyruvyl shikimate-3-phosphate and inorganic phosphate. The protein is 3-phosphoshikimate 1-carboxyvinyltransferase of Escherichia coli O1:K1 / APEC.